The following is a 168-amino-acid chain: G/U mismatch-specific DNA glycosylase (168 aa).

It belongs to the uracil-DNA glycosylase (UDG) superfamily. TDG/mug family. As to quaternary structure, binds DNA as a monomer.

Its subcellular location is the cytoplasm. It catalyses the reaction Specifically hydrolyzes mismatched double-stranded DNA and polynucleotides, releasing free uracil.. In terms of biological role, excises ethenocytosine and uracil, which can arise by alkylation or deamination of cytosine, respectively, from the corresponding mispairs with guanine in ds-DNA. It is capable of hydrolyzing the carbon-nitrogen bond between the sugar-phosphate backbone of the DNA and the mispaired base. The complementary strand guanine functions in substrate recognition. Required for DNA damage lesion repair in stationary-phase cells. The chain is G/U mismatch-specific DNA glycosylase from Escherichia coli O139:H28 (strain E24377A / ETEC).